The sequence spans 631 residues: Poly(A)-specific ribonuclease PARN (631 aa).

A divalent metal cation contacts are provided by aspartate 28 and glutamate 30. The tract at residues glutamate 147–isoleucine 173 is disordered. The segment covering glutamine 152 to proline 170 has biased composition (polar residues). In terms of domain architecture, R3H spans lysine 178–aspartate 244. The a divalent metal cation site is built by aspartate 291 and aspartate 381. Residues serine 568–tryptophan 631 are disordered.

Belongs to the CAF1 family. In terms of assembly, component of a complex at least composed of cpeb1, cpsf1, papd4/gld2, pabpc1/ePAB, parn and sympk. A divalent metal cation is required as a cofactor. Post-translationally, a 62 kDa form, which is produced by proteolytic cleavage, also exists. As to expression, in retina, it is constitutively present in most retinal cells, including the photoreceptors.

The protein localises to the cytoplasm. Its subcellular location is the nucleus. The catalysed reaction is Exonucleolytic cleavage of poly(A) to 5'-AMP.. Functionally, 3'-exoribonuclease that has a preference for poly(A) tails of mRNAs, thereby efficiently degrading poly(A) tails. Exonucleolytic degradation of the poly(A) tail is often the first step in the decay of eukaryotic mRNAs. Required during meiotic maturation to silence certain maternal mRNAs translationally. Does not require an adenosine residue at the 3' end, however, the addition of 25 non-adenylate residues at the 3' terminus, or a 3' terminal phosphate is inhibitory. Involved in dormant mRNAs regulation during oocyte maturation by counteracting polyadenylation mediated by papd4/gld2nt in immature eggs. During maturation it is excluded from the ribonucleoprotein complex, allowing poly(A) elongation by papd4/gld2nt and activation of mRNAs. The chain is Poly(A)-specific ribonuclease PARN (parn) from Xenopus laevis (African clawed frog).